The following is a 341-amino-acid chain: tRNA N6-adenosine threonylcarbamoyltransferase (341 aa).

Fe cation is bound by residues His111 and His115. Substrate-binding positions include 133 to 137 (AVSGG), Asp166, Gly179, Asp183, and Asn273. Fe cation is bound at residue Asp301.

This sequence belongs to the KAE1 / TsaD family. The cofactor is Fe(2+).

It is found in the cytoplasm. The enzyme catalyses L-threonylcarbamoyladenylate + adenosine(37) in tRNA = N(6)-L-threonylcarbamoyladenosine(37) in tRNA + AMP + H(+). Required for the formation of a threonylcarbamoyl group on adenosine at position 37 (t(6)A37) in tRNAs that read codons beginning with adenine. Is involved in the transfer of the threonylcarbamoyl moiety of threonylcarbamoyl-AMP (TC-AMP) to the N6 group of A37, together with TsaE and TsaB. TsaD likely plays a direct catalytic role in this reaction. In Geotalea daltonii (strain DSM 22248 / JCM 15807 / FRC-32) (Geobacter daltonii), this protein is tRNA N6-adenosine threonylcarbamoyltransferase.